The primary structure comprises 483 residues: MAQADIALIGLAVMGQNLILNMNDHGFVVCAFNRTVSKVDDFLANEAKGTKVLGAHSLEEMVSKLKKPRRIILLVKAGQAVDNFIEKLVPLLDIGDIIIDGGNSEYRDTMRRCRDLKDKGILFVGSGVSGGEDGARYGPSLMPGGNKEAWPHIKAIFQGIAAKVGTGEPCCDWVGDDGAGHFVKMVHNGIEYGDMQLICEAYHLMKDVLGLGHKEMAKAFEEWNKTELDSFLIEITASILKFQDADGKHLLPKIRDSAGQKGTGKWTAISALEYGVPVTLIGEAVFARCLSSLKDERIQASKKLKGPQNIPFEGDKKSFLEDIRKALYASKIISYAQGFMLLRQAATEFGWTLNYGGIALMWRGGCIIRSVFLGKIKDAFDRNPGLQNLLLDDFFKSAVENCQDSWRRAISTGVQAGIPMPCFTTALSFYDGYRHAMLPANLIQAQRDYFGAHTYELLAKPGQFIHTNWTGHGGSVSSSSYNA.

Residues 10–15 (GLAVMG) and 33–35 (NRT) each bind NADP(+). Position 38 is an N6-acetyllysine (Lys38). The residue at position 57 (Ser57) is a Phosphoserine. NADP(+) is bound by residues 75–77 (VKA) and Asn103. The substrate site is built by Asn103, Ser129, and Gly131. The residue at position 129 (Ser129) is a Phosphoserine. Lys184 functions as the Proton acceptor in the catalytic mechanism. A substrate-binding site is contributed by 187-188 (HN). Catalysis depends on Glu191, which acts as the Proton donor. Tyr192, Lys261, Arg288, Arg447, and His453 together coordinate substrate. Residue 478–481 (SSSY) participates in NADP(+) binding.

Belongs to the 6-phosphogluconate dehydrogenase family. As to quaternary structure, homodimer.

The protein localises to the cytoplasm. It catalyses the reaction 6-phospho-D-gluconate + NADP(+) = D-ribulose 5-phosphate + CO2 + NADPH. The protein operates within carbohydrate degradation; pentose phosphate pathway; D-ribulose 5-phosphate from D-glucose 6-phosphate (oxidative stage): step 3/3. Catalyzes the oxidative decarboxylation of 6-phosphogluconate to ribulose 5-phosphate and CO(2), with concomitant reduction of NADP to NADPH. The protein is 6-phosphogluconate dehydrogenase, decarboxylating (PGD) of Ovis aries (Sheep).